Consider the following 230-residue polypeptide: Increased recombination centers protein 19 (230 aa).

The protein belongs to the IRC19 family.

In terms of biological role, involved in sporulation and maintenance of the mitochondrial DNA. Is probably involved in a pathway contributing to genomic integrity. The protein is Increased recombination centers protein 19 (IRC19) of Saccharomyces cerevisiae (strain ATCC 204508 / S288c) (Baker's yeast).